Consider the following 961-residue polypeptide: SH3 domain-binding protein 4 (961 aa).

One can recognise an SH3 1 domain in the interval 55–114 (GNAKEVIAIKDYCPNNFTTLKFSKGDHLYVLDTSGGEWWYAHNTTEMGYIPSSYVQPLNY). 5 positions are modified to phosphoserine: Ser131, Ser244, Ser249, Ser277, and Ser294. A ZU5 domain is found at 315–452 (TNIVCKLDSS…LEPCMYLAIV (138 aa)). Phosphoserine is present on Ser635. The SH3 2 domain occupies 652–722 (SSLKFGKLLK…HTKNVLVVGK (71 aa)).

As to quaternary structure, homodimer or homooligomer. Interacts with DNM2, EPS15, clathrin, the adapter protein complex 2/AP-2 and TFRC. Interacts with the Rag GTPases RRAGA, RRAGB, RRAGC and RRAGD; the interaction is most probably direct, preferentially occurs with their inactive GDP-bound form and is negatively regulated by amino acids. Phosphorylated upon EGF stimulation. Phosphorylation prevents interaction with DNM2.

The protein localises to the membrane. It localises to the clathrin-coated pit. It is found in the cytoplasmic vesicle. Its subcellular location is the clathrin-coated vesicle. The protein resides in the nucleus. In terms of biological role, may function in transferrin receptor internalization at the plasma membrane through a cargo-specific control of clathrin-mediated endocytosis. Alternatively, may act as a negative regulator of the amino acid-induced TOR signaling by inhibiting the formation of active Rag GTPase complexes. Preferentially binds inactive Rag GTPase complexes and prevents their interaction with the mTORC1 complex inhibiting its relocalization to lysosomes and its activation. Thereby, may indirectly regulate cell growth, proliferation and autophagy. This Rattus norvegicus (Rat) protein is SH3 domain-binding protein 4 (Sh3bp4).